The chain runs to 78 residues: Large ribosomal subunit protein uL30 (78 aa).

Residues 58–68 are compositionally biased toward acidic residues; it reads DDTSPDAETGA. Residues 58 to 78 are disordered; the sequence is DDTSPDAETGADLERDGGNRS. Positions 69–78 are enriched in basic and acidic residues; that stretch reads DLERDGGNRS.

Belongs to the universal ribosomal protein uL30 family. Part of the 50S ribosomal subunit.

This is Large ribosomal subunit protein uL30 from Roseiflexus sp. (strain RS-1).